The following is a 1342-amino-acid chain: DNA-directed RNA polymerase subunit beta (1342 aa).

It belongs to the RNA polymerase beta chain family. In terms of assembly, the RNAP catalytic core consists of 2 alpha, 1 beta, 1 beta' and 1 omega subunit. When a sigma factor is associated with the core the holoenzyme is formed, which can initiate transcription.

The enzyme catalyses RNA(n) + a ribonucleoside 5'-triphosphate = RNA(n+1) + diphosphate. DNA-dependent RNA polymerase catalyzes the transcription of DNA into RNA using the four ribonucleoside triphosphates as substrates. The chain is DNA-directed RNA polymerase subunit beta from Proteus mirabilis (strain HI4320).